A 436-amino-acid chain; its full sequence is Probable sodium/metabolite cotransporter BASS4, chloroplastic (436 aa).

The transit peptide at 1–47 (MAIASTLASTQNPFLCLRQPPSPGNRSVVFRRCQDPCGRRWISRSIR) directs the protein to the chloroplast. A run of 9 helical transmembrane segments spans residues 109–129 (FLPLALVSGVGLGFANPTLGC), 131–151 (ADKYSFTKISTCGIFIISGLT), 157–177 (IGAAVKGWPLGLFGLISILLL), 195–215 (LVTGLGIFCCMPTTLSSGVAL), 225–245 (LALAVTVASNLLGILTIPFWV), 257–277 (FPTDQLFRSLIVTLLIPLIIG), 297–314 (LFSKINAICLSLVPWIQV), 328–348 (VFLAAVGIGILLHLSLLAFNA), and 403–423 (PCVAAHLNQIMIDSVLVNLWL).

Belongs to the bile acid:sodium symporter (BASS) (TC 2.A.28) family.

The protein resides in the membrane. Its subcellular location is the plastid. It localises to the chloroplast envelope. Its function is as follows. May function as sodium-coupled metabolite transporter across the chloroplast envelope. This chain is Probable sodium/metabolite cotransporter BASS4, chloroplastic (BASS4), found in Arabidopsis thaliana (Mouse-ear cress).